The sequence spans 521 residues: Jacalin-related lectin 38 (521 aa).

One can recognise an F-box domain in the interval 2–48; it reads MQPDHDLPYDLEGEILSHLPIQILARFRCVCKRWNTLFKERRFFNSD. 3 Kelch repeats span residues 145–190, 326–373, and 486–521; these read KHYK…PYSV, YIYI…ITQH, and MSFV…SPLP. The 143-residue stretch at 377-519 folds into the Jacalin-type lectin domain; it reads SRFAPLRGIQ…LTAFGVHFSP (143 aa).

Belongs to the jacalin lectin family.

The polypeptide is Jacalin-related lectin 38 (JAL38) (Arabidopsis thaliana (Mouse-ear cress)).